Consider the following 295-residue polypeptide: 4-hydroxy-tetrahydrodipicolinate synthase (295 aa).

Residue T47 participates in pyruvate binding. The Proton donor/acceptor role is filled by Y135. Catalysis depends on K163, which acts as the Schiff-base intermediate with substrate. I206 provides a ligand contact to pyruvate.

Homodimer. In fact, exists in a monomer-dimer equilibrium in solution, shifted in favor of the dimer in presence of the substrate pyruvate; the monomer has significantly reduced activity compared with the dimer.

The protein resides in the cytoplasm. It carries out the reaction L-aspartate 4-semialdehyde + pyruvate = (2S,4S)-4-hydroxy-2,3,4,5-tetrahydrodipicolinate + H2O + H(+). It participates in amino-acid biosynthesis; L-lysine biosynthesis via DAP pathway; (S)-tetrahydrodipicolinate from L-aspartate: step 3/4. Is insensitive to lysine-feedback inhibition. Shows ASA substrate inhibition. Its function is as follows. Catalyzes the condensation of (S)-aspartate-beta-semialdehyde [(S)-ASA] and pyruvate to 4-hydroxy-tetrahydrodipicolinate (HTPA). This Staphylococcus aureus (strain MRSA252) protein is 4-hydroxy-tetrahydrodipicolinate synthase.